The primary structure comprises 149 residues: Azurin (149 aa).

Residues 1–20 (MLAKATLAIVLSAASLPVLA) form the signal peptide. The 129-residue stretch at 21–149 (AQCEATIESN…MMKGTLKLSN (129 aa)) folds into the Plastocyanin-like domain. A disulfide bridge links C23 with C46. Cu cation-binding residues include H66, C132, H137, and M141.

It is found in the periplasm. Functionally, transfers electrons from cytochrome c551 to cytochrome oxidase. This Achromobacter denitrificans (Alcaligenes denitrificans) protein is Azurin (azu).